The primary structure comprises 347 residues: tRNA pseudouridine synthase D (347 aa).

Residue Asp-81 is the Nucleophile of the active site. One can recognise a TRUD domain in the interval 158 to 304 (GVPNYFGNQR…MRHDRRAIAL (147 aa)).

This sequence belongs to the pseudouridine synthase TruD family.

It carries out the reaction uridine(13) in tRNA = pseudouridine(13) in tRNA. Its function is as follows. Responsible for synthesis of pseudouridine from uracil-13 in transfer RNAs. The sequence is that of tRNA pseudouridine synthase D from Vibrio vulnificus (strain CMCP6).